The following is a 235-amino-acid chain: Casparian strip membrane protein 2 (235 aa).

The segment at 1-46 (MSGSDTSGSVHVDEHGHGKASSSYDGAGAPAPAPAPFQGHRKAGSG) is disordered. The Cytoplasmic portion of the chain corresponds to 1–67 (MSGSDTSGSV…GSGGDGLRRC (67 aa)). The chain crosses the membrane as a helical span at residues 68–88 (LGLIDFVLRVAAFGPTLAAAI). The Extracellular portion of the chain corresponds to 89–115 (SIGTSDERLSVFTNYFQFRARFDDFPA). Residues 116-136 (FEFFIVANAIAAGYMVLSLPF) traverse the membrane as a helical segment. Residues 137–150 (SAATIMSSKATGVK) lie on the Cytoplasmic side of the membrane. Residues 151–171 (LLLLICDTIMVGLLTAAASAA) form a helical membrane-spanning segment. The Extracellular portion of the chain corresponds to 172–203 (AAMVYVAHEGNLRANWVPICLQFHGFCQRTSG). The chain crosses the membrane as a helical span at residues 204-224 (AVIASFLAVFVLMVLIVMAAF). Residues 225-235 (TMPRRTHHTAS) lie on the Cytoplasmic side of the membrane.

Belongs to the Casparian strip membrane proteins (CASP) family. In terms of assembly, homodimer and heterodimers.

The protein resides in the cell membrane. In terms of biological role, regulates membrane-cell wall junctions and localized cell wall deposition. Required for establishment of the Casparian strip membrane domain (CSD) and the subsequent formation of Casparian strips, a cell wall modification of the root endodermis that determines an apoplastic barrier between the intraorganismal apoplasm and the extraorganismal apoplasm and prevents lateral diffusion. This is Casparian strip membrane protein 2 from Oryza sativa subsp. indica (Rice).